A 149-amino-acid polypeptide reads, in one-letter code: MPTVDLKILDARLADQQPAYATPGSAGLDLRAAIDAETEIRPGETRLIPTGIALHLEDPRYAAMILPRSGLGHKHGIVLGNLVGLIDSDYQGQVFVSVWNRGHETFRLAPLDRIAQMVIVPVVQVDFRVVDDFTSSSRGSGGFGSTGRQ.

Residues 68–70 (RSG), asparagine 81, and 85–87 (LID) each bind substrate.

Belongs to the dUTPase family. The cofactor is Mg(2+).

The catalysed reaction is dUTP + H2O = dUMP + diphosphate + H(+). It participates in pyrimidine metabolism; dUMP biosynthesis; dUMP from dCTP (dUTP route): step 2/2. Functionally, this enzyme is involved in nucleotide metabolism: it produces dUMP, the immediate precursor of thymidine nucleotides and it decreases the intracellular concentration of dUTP so that uracil cannot be incorporated into DNA. This is Deoxyuridine 5'-triphosphate nucleotidohydrolase from Laribacter hongkongensis (strain HLHK9).